The sequence spans 616 residues: Dihydroxy-acid dehydratase (616 aa).

Asp81 is a Mg(2+) binding site. Cys122 serves as a coordination point for [2Fe-2S] cluster. Residues Asp123 and Lys124 each coordinate Mg(2+). At Lys124 the chain carries N6-carboxylysine. A [2Fe-2S] cluster-binding site is contributed by Cys195. Residue Glu491 participates in Mg(2+) binding. Ser517 serves as the catalytic Proton acceptor.

The protein belongs to the IlvD/Edd family. Homodimer. [2Fe-2S] cluster serves as cofactor. Mg(2+) is required as a cofactor.

It catalyses the reaction (2R)-2,3-dihydroxy-3-methylbutanoate = 3-methyl-2-oxobutanoate + H2O. It carries out the reaction (2R,3R)-2,3-dihydroxy-3-methylpentanoate = (S)-3-methyl-2-oxopentanoate + H2O. The protein operates within amino-acid biosynthesis; L-isoleucine biosynthesis; L-isoleucine from 2-oxobutanoate: step 3/4. It participates in amino-acid biosynthesis; L-valine biosynthesis; L-valine from pyruvate: step 3/4. Its function is as follows. Functions in the biosynthesis of branched-chain amino acids. Catalyzes the dehydration of (2R,3R)-2,3-dihydroxy-3-methylpentanoate (2,3-dihydroxy-3-methylvalerate) into 2-oxo-3-methylpentanoate (2-oxo-3-methylvalerate) and of (2R)-2,3-dihydroxy-3-methylbutanoate (2,3-dihydroxyisovalerate) into 2-oxo-3-methylbutanoate (2-oxoisovalerate), the penultimate precursor to L-isoleucine and L-valine, respectively. The protein is Dihydroxy-acid dehydratase of Tolumonas auensis (strain DSM 9187 / NBRC 110442 / TA 4).